We begin with the raw amino-acid sequence, 145 residues long: Deoxyuridine 5'-triphosphate nucleotidohydrolase (145 aa).

Substrate-binding positions include 65 to 67, Asn-78, and 82 to 84; these read RSG and TID.

Belongs to the dUTPase family. Mg(2+) serves as cofactor.

The catalysed reaction is dUTP + H2O = dUMP + diphosphate + H(+). It functions in the pathway pyrimidine metabolism; dUMP biosynthesis; dUMP from dCTP (dUTP route): step 2/2. This enzyme is involved in nucleotide metabolism: it produces dUMP, the immediate precursor of thymidine nucleotides and it decreases the intracellular concentration of dUTP so that uracil cannot be incorporated into DNA. This is Deoxyuridine 5'-triphosphate nucleotidohydrolase from Clostridium tetani (strain Massachusetts / E88).